Consider the following 377-residue polypeptide: tRNA-specific 2-thiouridylase MnmA (377 aa).

ATP is bound by residues 8–15 and methionine 34; that span reads GMSGGVDS. Residues 94–96 form an interaction with target base in tRNA region; the sequence is NPD. The Nucleophile role is filled by cysteine 99. Cysteine 99 and cysteine 201 are oxidised to a cystine. Glycine 123 contributes to the ATP binding site. The interaction with tRNA stretch occupies residues 151-153; it reads KDQ. The active-site Cysteine persulfide intermediate is the cysteine 201. Residues 315-316 form an interaction with tRNA region; the sequence is RY.

This sequence belongs to the MnmA/TRMU family.

It is found in the cytoplasm. It catalyses the reaction S-sulfanyl-L-cysteinyl-[protein] + uridine(34) in tRNA + AH2 + ATP = 2-thiouridine(34) in tRNA + L-cysteinyl-[protein] + A + AMP + diphosphate + H(+). Functionally, catalyzes the 2-thiolation of uridine at the wobble position (U34) of tRNA, leading to the formation of s(2)U34. The polypeptide is tRNA-specific 2-thiouridylase MnmA (Acinetobacter baumannii (strain ACICU)).